A 923-amino-acid polypeptide reads, in one-letter code: Isoleucine--tRNA ligase (923 aa).

Residues 57 to 67 (PYANGDIHIGT) carry the 'HIGH' region motif. Residue E561 coordinates L-isoleucyl-5'-AMP. The 'KMSKS' region signature appears at 602–606 (AMHKS). K605 is an ATP binding site. Residues C895, C898, C915, and C918 each contribute to the Zn(2+) site.

This sequence belongs to the class-I aminoacyl-tRNA synthetase family. IleS type 1 subfamily. As to quaternary structure, monomer. It depends on Zn(2+) as a cofactor.

It localises to the cytoplasm. The enzyme catalyses tRNA(Ile) + L-isoleucine + ATP = L-isoleucyl-tRNA(Ile) + AMP + diphosphate. Catalyzes the attachment of isoleucine to tRNA(Ile). As IleRS can inadvertently accommodate and process structurally similar amino acids such as valine, to avoid such errors it has two additional distinct tRNA(Ile)-dependent editing activities. One activity is designated as 'pretransfer' editing and involves the hydrolysis of activated Val-AMP. The other activity is designated 'posttransfer' editing and involves deacylation of mischarged Val-tRNA(Ile). The sequence is that of Isoleucine--tRNA ligase from Brachyspira hyodysenteriae (strain ATCC 49526 / WA1).